A 485-amino-acid polypeptide reads, in one-letter code: NADH-quinone oxidoreductase subunit N (485 aa).

14 helical membrane-spanning segments follow: residues 8–28 (LIAL…MLSI), 35–55 (FLNA…LWFV), 71–91 (GFAM…CTFA), 105–125 (FYLL…ANHL), 127–147 (TLFL…GYAF), 159–179 (YTIL…LVYA), 203–223 (LLAG…LVPF), 235–255 (PAPV…GVVM), 271–291 (VVLG…ALSQ), 297–317 (LLGY…IALQ), 326–346 (VGVY…VVSL), 373–393 (AAVM…LGFI), 408–430 (WWLV…RVAV), and 455–475 (IVVL…QPLI).

This sequence belongs to the complex I subunit 2 family. As to quaternary structure, NDH-1 is composed of 13 different subunits. Subunits NuoA, H, J, K, L, M, N constitute the membrane sector of the complex.

It localises to the cell inner membrane. The catalysed reaction is a quinone + NADH + 5 H(+)(in) = a quinol + NAD(+) + 4 H(+)(out). Its function is as follows. NDH-1 shuttles electrons from NADH, via FMN and iron-sulfur (Fe-S) centers, to quinones in the respiratory chain. The immediate electron acceptor for the enzyme in this species is believed to be ubiquinone. Couples the redox reaction to proton translocation (for every two electrons transferred, four hydrogen ions are translocated across the cytoplasmic membrane), and thus conserves the redox energy in a proton gradient. The chain is NADH-quinone oxidoreductase subunit N from Salmonella paratyphi A (strain ATCC 9150 / SARB42).